The primary structure comprises 491 residues: Aspartyl/glutamyl-tRNA(Asn/Gln) amidotransferase subunit B (491 aa).

It belongs to the GatB/GatE family. GatB subfamily. Heterotrimer of A, B and C subunits.

It carries out the reaction L-glutamyl-tRNA(Gln) + L-glutamine + ATP + H2O = L-glutaminyl-tRNA(Gln) + L-glutamate + ADP + phosphate + H(+). It catalyses the reaction L-aspartyl-tRNA(Asn) + L-glutamine + ATP + H2O = L-asparaginyl-tRNA(Asn) + L-glutamate + ADP + phosphate + 2 H(+). Allows the formation of correctly charged Asn-tRNA(Asn) or Gln-tRNA(Gln) through the transamidation of misacylated Asp-tRNA(Asn) or Glu-tRNA(Gln) in organisms which lack either or both of asparaginyl-tRNA or glutaminyl-tRNA synthetases. The reaction takes place in the presence of glutamine and ATP through an activated phospho-Asp-tRNA(Asn) or phospho-Glu-tRNA(Gln). The sequence is that of Aspartyl/glutamyl-tRNA(Asn/Gln) amidotransferase subunit B from Prochlorococcus marinus (strain NATL2A).